The following is an 88-amino-acid chain: Small ribosomal subunit protein bS20 (88 aa).

It belongs to the bacterial ribosomal protein bS20 family.

Binds directly to 16S ribosomal RNA. The polypeptide is Small ribosomal subunit protein bS20 (Desulforudis audaxviator (strain MP104C)).